The chain runs to 506 residues: 2-isopropylmalate synthase (506 aa).

One can recognise a Pyruvate carboxyltransferase domain in the interval 4-266; sequence ILFMDTTLRD…EPSMTLKEIK (263 aa). The Mn(2+) site is built by Asp-13, His-201, His-203, and Asn-237. The tract at residues 390-506 is regulatory domain; that stretch reads NITQLQVHFV…KLKSFIQLVK (117 aa).

Belongs to the alpha-IPM synthase/homocitrate synthase family. LeuA type 1 subfamily. In terms of assembly, homodimer. Mn(2+) serves as cofactor.

Its subcellular location is the cytoplasm. It carries out the reaction 3-methyl-2-oxobutanoate + acetyl-CoA + H2O = (2S)-2-isopropylmalate + CoA + H(+). It participates in amino-acid biosynthesis; L-leucine biosynthesis; L-leucine from 3-methyl-2-oxobutanoate: step 1/4. In terms of biological role, catalyzes the condensation of the acetyl group of acetyl-CoA with 3-methyl-2-oxobutanoate (2-ketoisovalerate) to form 3-carboxy-3-hydroxy-4-methylpentanoate (2-isopropylmalate). In Bacillus anthracis (strain A0248), this protein is 2-isopropylmalate synthase.